The primary structure comprises 138 residues: Protein FAM136A (138 aa).

Ala-2 bears the N-acetylalanine mark. Phosphothreonine occurs at positions 124 and 126.

The protein belongs to the FAM136 family.

The chain is Protein FAM136A (Fam136a) from Mus musculus (Mouse).